Here is a 92-residue protein sequence, read N- to C-terminus: Large ribosomal subunit protein bL25 (92 aa).

This sequence belongs to the bacterial ribosomal protein bL25 family. Part of the 50S ribosomal subunit; part of the 5S rRNA/L5/L18/L25 subcomplex. Contacts the 5S rRNA. Binds to the 5S rRNA independently of L5 and L18.

Functionally, this is one of the proteins that binds to the 5S RNA in the ribosome where it forms part of the central protuberance. The sequence is that of Large ribosomal subunit protein bL25 from Vibrio vulnificus (strain CMCP6).